The primary structure comprises 78 residues: Putative DNA-binding protein MT0521 (78 aa).

Positions 24–45 form a DNA-binding region, H-T-H motif; that stretch reads LLTVAEVAALMRVSKMTVYRLV.

In Mycobacterium tuberculosis (strain CDC 1551 / Oshkosh), this protein is Putative DNA-binding protein MT0521.